A 169-amino-acid polypeptide reads, in one-letter code: Transcription antitermination protein NusB (169 aa).

A disordered region spans residues 1 to 20 (MAESSNKPFRGPVRANDRKA).

It belongs to the NusB family.

Its function is as follows. Involved in transcription antitermination. Required for transcription of ribosomal RNA (rRNA) genes. Binds specifically to the boxA antiterminator sequence of the ribosomal RNA (rrn) operons. The protein is Transcription antitermination protein NusB of Bradyrhizobium sp. (strain BTAi1 / ATCC BAA-1182).